The sequence spans 261 residues: Thiazole synthase (261 aa).

The active-site Schiff-base intermediate with DXP is Lys102. Residues Gly163, 189 to 190, and 211 to 212 contribute to the 1-deoxy-D-xylulose 5-phosphate site; these read AG and NT.

It belongs to the ThiG family. In terms of assembly, homotetramer. Forms heterodimers with either ThiH or ThiS.

It localises to the cytoplasm. It carries out the reaction [ThiS sulfur-carrier protein]-C-terminal-Gly-aminoethanethioate + 2-iminoacetate + 1-deoxy-D-xylulose 5-phosphate = [ThiS sulfur-carrier protein]-C-terminal Gly-Gly + 2-[(2R,5Z)-2-carboxy-4-methylthiazol-5(2H)-ylidene]ethyl phosphate + 2 H2O + H(+). It functions in the pathway cofactor biosynthesis; thiamine diphosphate biosynthesis. In terms of biological role, catalyzes the rearrangement of 1-deoxy-D-xylulose 5-phosphate (DXP) to produce the thiazole phosphate moiety of thiamine. Sulfur is provided by the thiocarboxylate moiety of the carrier protein ThiS. In vitro, sulfur can be provided by H(2)S. The polypeptide is Thiazole synthase (Myxococcus xanthus (strain DK1622)).